The primary structure comprises 100 residues: NADH-quinone oxidoreductase subunit K (100 aa).

Transmembrane regions (helical) follow at residues 4-24 (TSYYVLLSAILFTIGVLGVLL), 29-49 (IVIFMSVELMLNAANLALVAF), and 61-81 (IVFFVITVAAAEVAVGLALLV).

The protein belongs to the complex I subunit 4L family. As to quaternary structure, NDH-1 is composed of 14 different subunits. Subunits NuoA, H, J, K, L, M, N constitute the membrane sector of the complex.

It is found in the cell membrane. It carries out the reaction a quinone + NADH + 5 H(+)(in) = a quinol + NAD(+) + 4 H(+)(out). Functionally, NDH-1 shuttles electrons from NADH, via FMN and iron-sulfur (Fe-S) centers, to quinones in the respiratory chain. The immediate electron acceptor for the enzyme in this species is believed to be ubiquinone. Couples the redox reaction to proton translocation (for every two electrons transferred, four hydrogen ions are translocated across the cytoplasmic membrane), and thus conserves the redox energy in a proton gradient. The chain is NADH-quinone oxidoreductase subunit K from Chloroflexus aggregans (strain MD-66 / DSM 9485).